A 269-amino-acid polypeptide reads, in one-letter code: Cell cycle regulator CcrZ (269 aa).

ATP contacts are provided by F39, H76, W77, M78, and G80. A Brenner's motif [HXDhX3N] motif is present at residues 164–171 (HCDVNHNN). The active-site Proton acceptor is the D166. An APH motif is present at residues 180 to 203 (LYLIDWDGAMIADPAMDLGPLLYH).

The protein belongs to the aminoglycoside phosphotransferase family. As to quaternary structure, monomer in solution. Interacts with DnaA (via domains I (1-82) and III (111-326)). Interacts with DnaB. Interacts with FtsZ.

The protein localises to the cytoplasm. The catalysed reaction is D-ribose + ATP = D-ribose 5-phosphate + ADP + H(+). The enzyme catalyses 2-deoxy-D-ribose + ATP = 2-deoxy-D-ribose 5-phosphate + ADP + H(+). Its activity is regulated as follows. Activated by D-ribose and 2-deoxy-D-ribose. Slightly activated by kanamycin and gentamicin. In terms of biological role, plays a role in cell cycle regulation and chromosome integrity. Activates DnaA-dependent chromosomal DNA replication initiation ensuring that the chromosome is replicated at the right time during the cell cycle. May regulate replication initiation through phosphorylation of a possible second messenger or metabolite, and by interacting with replication initiation proteins. Has ATPase activity with D-ribose and 2-deoxy-D-ribose in vitro, but not with choline. Involved in DNA damage response. This is Cell cycle regulator CcrZ from Bacillus subtilis (strain 168).